The chain runs to 94 residues: Co-chaperonin GroES (94 aa).

Belongs to the GroES chaperonin family. Heptamer of 7 subunits arranged in a ring. Interacts with the chaperonin GroEL.

It localises to the cytoplasm. Its function is as follows. Together with the chaperonin GroEL, plays an essential role in assisting protein folding. The GroEL-GroES system forms a nano-cage that allows encapsulation of the non-native substrate proteins and provides a physical environment optimized to promote and accelerate protein folding. GroES binds to the apical surface of the GroEL ring, thereby capping the opening of the GroEL channel. This is Co-chaperonin GroES from Acetivibrio thermocellus (strain ATCC 27405 / DSM 1237 / JCM 9322 / NBRC 103400 / NCIMB 10682 / NRRL B-4536 / VPI 7372) (Clostridium thermocellum).